The primary structure comprises 120 residues: UPF0295 protein Aflv_0370 (120 aa).

A run of 2 helical transmembrane segments spans residues 12–32 (IRTF…GGIF) and 42–62 (LFMI…FWIG).

This sequence belongs to the UPF0295 family.

It localises to the cell membrane. This Anoxybacillus flavithermus (strain DSM 21510 / WK1) protein is UPF0295 protein Aflv_0370.